Here is a 503-residue protein sequence, read N- to C-terminus: Probable cytosol aminopeptidase (503 aa).

The Mn(2+) site is built by lysine 274 and aspartate 279. Lysine 286 is an active-site residue. Positions 297, 356, and 358 each coordinate Mn(2+). Residue arginine 360 is part of the active site.

This sequence belongs to the peptidase M17 family. Requires Mn(2+) as cofactor.

It localises to the cytoplasm. It carries out the reaction Release of an N-terminal amino acid, Xaa-|-Yaa-, in which Xaa is preferably Leu, but may be other amino acids including Pro although not Arg or Lys, and Yaa may be Pro. Amino acid amides and methyl esters are also readily hydrolyzed, but rates on arylamides are exceedingly low.. It catalyses the reaction Release of an N-terminal amino acid, preferentially leucine, but not glutamic or aspartic acids.. In terms of biological role, presumably involved in the processing and regular turnover of intracellular proteins. Catalyzes the removal of unsubstituted N-terminal amino acids from various peptides. This is Probable cytosol aminopeptidase from Burkholderia orbicola (strain AU 1054).